We begin with the raw amino-acid sequence, 281 residues long: 16S rRNA (guanine(1405)-N(7))-methyltransferase (281 aa).

Residues Y60, 105 to 107, R111, G136, D160, 186 to 187, F203, and Q212 contribute to the S-adenosyl-L-methionine site; these read HTS and QG.

This sequence belongs to the methyltransferase superfamily. Aminoglycoside resistance family.

The enzyme catalyses guanosine(1405) in 16S rRNA + S-adenosyl-L-methionine = N(7)-methylguanosine(1405) in 16S rRNA + S-adenosyl-L-homocysteine. Functionally, specifically methylates the N(7) position of guanine 1405 in 16S rRNA. Confers resistance to various aminoglycosides, including gentamicin and kanamycin. This Proteus mirabilis protein is 16S rRNA (guanine(1405)-N(7))-methyltransferase (rmtC).